Here is a 152-residue protein sequence, read N- to C-terminus: Lipoprotein signal peptidase (152 aa).

The next 3 membrane-spanning stretches (helical) occupy residues 5–25, 61–81, and 84–104; these read LFVL…FWIV, WFFV…LATH, and LNIW…GNFI. Residues Asp114 and Asp130 contribute to the active site. The chain crosses the membrane as a helical span at residues 125 to 145; the sequence is IFNVADSYLTVGVILLVICLW.

Belongs to the peptidase A8 family.

Its subcellular location is the cell membrane. It catalyses the reaction Release of signal peptides from bacterial membrane prolipoproteins. Hydrolyzes -Xaa-Yaa-Zaa-|-(S,diacylglyceryl)Cys-, in which Xaa is hydrophobic (preferably Leu), and Yaa (Ala or Ser) and Zaa (Gly or Ala) have small, neutral side chains.. It participates in protein modification; lipoprotein biosynthesis (signal peptide cleavage). Functionally, this protein specifically catalyzes the removal of signal peptides from prolipoproteins. The polypeptide is Lipoprotein signal peptidase (Streptococcus pyogenes serotype M6 (strain ATCC BAA-946 / MGAS10394)).